Reading from the N-terminus, the 281-residue chain is Diaminopimelate epimerase (281 aa).

Substrate contacts are provided by N13 and N66. C75 (proton donor) is an active-site residue. Substrate-binding positions include 76–77 (GN), N164, N197, and 215–216 (ER). Catalysis depends on C224, which acts as the Proton acceptor. 225 to 226 (GT) contacts substrate.

The protein belongs to the diaminopimelate epimerase family. In terms of assembly, homodimer.

The protein localises to the cytoplasm. The enzyme catalyses (2S,6S)-2,6-diaminopimelate = meso-2,6-diaminopimelate. Its pathway is amino-acid biosynthesis; L-lysine biosynthesis via DAP pathway; DL-2,6-diaminopimelate from LL-2,6-diaminopimelate: step 1/1. In terms of biological role, catalyzes the stereoinversion of LL-2,6-diaminopimelate (L,L-DAP) to meso-diaminopimelate (meso-DAP), a precursor of L-lysine and an essential component of the bacterial peptidoglycan. In Rippkaea orientalis (strain PCC 8801 / RF-1) (Cyanothece sp. (strain PCC 8801)), this protein is Diaminopimelate epimerase.